The sequence spans 427 residues: Vitamin D3 receptor (427 aa).

Residues 21–96 constitute a DNA-binding region (nuclear receptor); it reads PRICGVCGDR…IGMMKEFILT (76 aa). Cys-24, Cys-27, Cys-41, Cys-44, Cys-60, Cys-66, Cys-76, and Cys-79 together coordinate Zn(2+). NR C4-type zinc fingers lie at residues 24 to 44 and 60 to 84; these read CGVCGDRATGFHFNAMTCEGC and CPFNGDCRITKDNRRHCQACRLKRC. The tract at residues 97–126 is hinge; the sequence is DEEVQRKREMILKRKEEEALKDSLRPKLSE. Positions 127–423 constitute an NR LBD domain; that stretch reads EQQRIIAILL…LTPLVLEVFG (297 aa). Tyr-143 serves as a coordination point for calcitriol. Positions 158-183 are disordered; it reads RVNDGGGSHPSRPNSRHTPSFSGDSS. Ser-237 is a binding site for calcitriol. Residues 246–264 form an interaction with coactivator LXXLL motif region; sequence KMIPGFRDLTSEDQIVLLK. Residues Arg-274, Ser-278, His-305, and His-397 each coordinate calcitriol. A 9aaTAD motif is present at residues 416 to 424; the sequence is PLVLEVFGN.

Belongs to the nuclear hormone receptor family. NR1 subfamily. Homodimer in the absence of bound vitamin D3. Heterodimer with RXRA after vitamin D3 binding. Interacts with MED1, NCOA1, NCOA2, NCOA3 and NCOA6 coactivators, leading to a strong increase of transcription of target genes. Interacts with the corepressor NCOR1. Interacts with SNW1. Interacts with IRX4, the interaction does not affect its transactivation activity. In terms of processing, ubiquitinated by UBR5, leading to its degradation: UBR5 specifically recognizes and binds ligand-bound VDR when it is not associated with coactivators (NCOAs). In presence of NCOAs, the UBR5-degron is not accessible, preventing its ubiquitination and degradation.

It localises to the nucleus. The protein localises to the cytoplasm. Nuclear receptor for calcitriol, the active form of vitamin D3 which mediates the action of this vitamin on cells. Enters the nucleus upon vitamin D3 binding where it forms heterodimers with the retinoid X receptor/RXR. The VDR-RXR heterodimers bind to specific response elements on DNA and activate the transcription of vitamin D3-responsive target genes. Plays a central role in calcium homeostasis. This is Vitamin D3 receptor (VDR) from Saguinus oedipus (Cotton-top tamarin).